Reading from the N-terminus, the 307-residue chain is Homoserine O-acetyltransferase (307 aa).

Cys-142 acts as the Acyl-thioester intermediate in catalysis. Lys-163 and Ser-192 together coordinate substrate. His-235 functions as the Proton acceptor in the catalytic mechanism. Glu-237 is a catalytic residue. Substrate is bound at residue Arg-249.

It belongs to the MetA family.

It is found in the cytoplasm. The catalysed reaction is L-homoserine + acetyl-CoA = O-acetyl-L-homoserine + CoA. Its pathway is amino-acid biosynthesis; L-methionine biosynthesis via de novo pathway; O-acetyl-L-homoserine from L-homoserine: step 1/1. Functionally, transfers an acetyl group from acetyl-CoA to L-homoserine, forming acetyl-L-homoserine. This is Homoserine O-acetyltransferase from Rhizobium leguminosarum bv. trifolii (strain WSM2304).